The following is a 193-amino-acid chain: Acyl carrier protein phosphodiesterase (193 aa).

Belongs to the AcpH family.

It catalyses the reaction holo-[ACP] + H2O = apo-[ACP] + (R)-4'-phosphopantetheine + H(+). Converts holo-ACP to apo-ACP by hydrolytic cleavage of the phosphopantetheine prosthetic group from ACP. This Salmonella paratyphi A (strain ATCC 9150 / SARB42) protein is Acyl carrier protein phosphodiesterase.